The following is a 105-amino-acid chain: Thioredoxin (105 aa).

Positions 1 to 105 constitute a Thioredoxin domain; the sequence is MVNNVTDISF…SLLDWINKSI (105 aa). The cysteines at positions 30 and 33 are disulfide-linked.

The protein belongs to the thioredoxin family.

Its function is as follows. Component of the thioredoxin-thioredoxin reductase system. Participates in various redox reactions through the reversible oxidation of its active center dithiol to a disulfide and catalyzes dithiol-disulfide exchange reactions. The protein is Thioredoxin (trxA) of Rickettsia typhi (strain ATCC VR-144 / Wilmington).